The following is a 413-amino-acid chain: Exodeoxyribonuclease 7 large subunit (413 aa).

This sequence belongs to the XseA family. Heterooligomer composed of large and small subunits.

Its subcellular location is the cytoplasm. It carries out the reaction Exonucleolytic cleavage in either 5'- to 3'- or 3'- to 5'-direction to yield nucleoside 5'-phosphates.. Functionally, bidirectionally degrades single-stranded DNA into large acid-insoluble oligonucleotides, which are then degraded further into small acid-soluble oligonucleotides. In Corynebacterium efficiens (strain DSM 44549 / YS-314 / AJ 12310 / JCM 11189 / NBRC 100395), this protein is Exodeoxyribonuclease 7 large subunit.